Consider the following 546-residue polypeptide: Chaperonin GroEL 2 (546 aa).

Residues Thr-30–Pro-33, Lys-51, Asp-87–Thr-91, Gly-415, Asn-479–Ala-481, and Asp-495 contribute to the ATP site.

The protein belongs to the chaperonin (HSP60) family. Forms a cylinder of 14 subunits composed of two heptameric rings stacked back-to-back. Interacts with the co-chaperonin GroES.

Its subcellular location is the cytoplasm. The catalysed reaction is ATP + H2O + a folded polypeptide = ADP + phosphate + an unfolded polypeptide.. In terms of biological role, together with its co-chaperonin GroES, plays an essential role in assisting protein folding. The GroEL-GroES system forms a nano-cage that allows encapsulation of the non-native substrate proteins and provides a physical environment optimized to promote and accelerate protein folding. This Chromobacterium violaceum (strain ATCC 12472 / DSM 30191 / JCM 1249 / CCUG 213 / NBRC 12614 / NCIMB 9131 / NCTC 9757 / MK) protein is Chaperonin GroEL 2.